Reading from the N-terminus, the 345-residue chain is Fe-S cluster assembly protein DRE2 (345 aa).

The N-terminal SAM-like domain stretch occupies residues 29 to 163 (GDSGDRTLLL…KPDYAEQEVV (135 aa)). A linker region spans residues 164–237 (PLRFGAKKVN…EDTLLTEADL (74 aa)). [2Fe-2S] cluster contacts are provided by cysteine 247, cysteine 258, cysteine 261, and cysteine 263. A fe-S binding site A region spans residues 247–263 (CAPQPGKKRRACKDCTC). [4Fe-4S] cluster contacts are provided by cysteine 308, cysteine 311, cysteine 319, and cysteine 322. 2 consecutive short sequence motifs (cx2C motif) follow at residues 308 to 311 (CNSC) and 319 to 322 (CADC). A fe-S binding site B region spans residues 308 to 322 (CNSCYLGDAFRCADC).

Belongs to the anamorsin family. As to quaternary structure, monomer. Interacts with TAH18. Interacts with MIA40. [2Fe-2S] cluster is required as a cofactor. Requires [4Fe-4S] cluster as cofactor.

The protein localises to the cytoplasm. It is found in the mitochondrion intermembrane space. Functionally, component of the cytosolic iron-sulfur (Fe-S) protein assembly (CIA) machinery required for the maturation of extramitochondrial Fe-S proteins. Part of an electron transfer chain functioning in an early step of cytosolic Fe-S biogenesis, facilitating the de novo assembly of a [4Fe-4S] cluster on the scaffold complex CFD1-NBP35. Electrons are transferred to DRE2 from NADPH via the FAD- and FMN-containing protein TAH18. TAH18-DRE2 are also required for the assembly of the diferric tyrosyl radical cofactor of ribonucleotide reductase (RNR), probably by providing electrons for reduction during radical cofactor maturation in the catalytic small subunit RNR2. This is Fe-S cluster assembly protein DRE2 from Podospora anserina (strain S / ATCC MYA-4624 / DSM 980 / FGSC 10383) (Pleurage anserina).